A 326-amino-acid polypeptide reads, in one-letter code: Putative ribose-phosphate pyrophosphokinase 2 (326 aa).

ATP is bound by residues 43-45 and 102-103; these read DGE and RQ. A Mg(2+)-binding site is contributed by His136. D-ribose 5-phosphate-binding positions include Asp225 and 229-233; that span reads NTGKT.

As to quaternary structure, homohexamer. Requires Mg(2+) as cofactor.

Its subcellular location is the cytoplasm. It carries out the reaction D-ribose 5-phosphate + ATP = 5-phospho-alpha-D-ribose 1-diphosphate + AMP + H(+). Its pathway is metabolic intermediate biosynthesis; 5-phospho-alpha-D-ribose 1-diphosphate biosynthesis; 5-phospho-alpha-D-ribose 1-diphosphate from D-ribose 5-phosphate (route I): step 1/1. Involved in the biosynthesis of the central metabolite phospho-alpha-D-ribosyl-1-pyrophosphate (PRPP) via the transfer of pyrophosphoryl group from ATP to 1-hydroxyl of ribose-5-phosphate (Rib-5-P). The sequence is that of Putative ribose-phosphate pyrophosphokinase 2 from Streptococcus pyogenes serotype M6 (strain ATCC BAA-946 / MGAS10394).